We begin with the raw amino-acid sequence, 717 residues long: Amino-acid acetyltransferase, mitochondrial (717 aa).

A mitochondrion-targeting transit peptide spans 1-23; the sequence is MFIWTKAPARGLGKASKILPKRD. The interval 35-70 is disordered; the sequence is KQFHTATTSVRRSSSSAKERQRAERQQLTRLLKESP. Positions 39–50 are enriched in low complexity; that stretch reads TATTSVRRSSSS. Residues 51 to 70 are compositionally biased toward basic and acidic residues; the sequence is AKERQRAERQQLTRLLKESP. The N-acetyltransferase domain occupies 518–691; the sequence is NPSIELADDP…GDVDDAKKRD (174 aa).

The protein belongs to the acetyltransferase family.

It localises to the mitochondrion. The enzyme catalyses L-glutamate + acetyl-CoA = N-acetyl-L-glutamate + CoA + H(+). It participates in amino-acid biosynthesis; L-arginine biosynthesis; N(2)-acetyl-L-ornithine from L-glutamate: step 1/4. N-acetylglutamate synthase involved in arginine biosynthesis. In Pyrenophora tritici-repentis (strain Pt-1C-BFP) (Wheat tan spot fungus), this protein is Amino-acid acetyltransferase, mitochondrial (arg2).